Here is a 1199-residue protein sequence, read N- to C-terminus: MVDVNRFEYMKIGLASPEKIRSWSFGEVKKPETINYRTLKPEKDGLFCERIFGPTKDWECYCGKYKRIRYKGIICDRCGVEVTKSKVRRERMGHIELAAPVSHIWYFKGIPSRMGLVLDMSPRALEEIIYFASYVVTDPGESTLEKKQLLSEKEYRAYREKFGSSFTAEMGAEAVRKLLRDVELEKEVAGLREDLRMIQGQRRTRAIKRLEVLDAFRNSGNNPEWMVLEVLPVIPPELRPMVQLDGGRFATSDLNDLYRRVINRNNRLKRLLDLGAPNIIVQNEKRMLQEAVDALIDNGRRGRPVTGPGNRPLKSLSHMLKGKQGRFRQNLLGKRVDYSGRSVIVVGPNLKMYQCGLPKEMALELFKPFVMKELVSRGIAPNIKSAKRKIERVQPEIWDVLEEVIREHPVLLNRAPTLHRLGIQAFEPTLVEGRAIRLHPLVCTAYNADFDGDQMAVHVPLSAEAQAEARLLMLAAQNILNPKDGKPVVTPSQDMVLGNYYLTLERENAIGEGKIFSTVNEALIAYQNGYVHFHTRVAIPAGVLKNPTFTEAQNEKLLVTTVGKLIFNEILPTTFPYLNEPSMNNLQEATPDQYFLEKGTDIAAEIKSRPIIEPFKKGFLGNVIAEVFKRFETTETSRMLDRMKNLGFKHSTRAGITVGIADIIVLPDKQEILVEAQDNVDRVMKSYRRGLITEEERYERVVKSWNDAKDEIQSRLMKSLNRLNPIFMMSDSGARGNASNFTQLAGMRGLMAAPSGRIIELPIKSSFREGLTVQEYFISTHGARKGLADTALKTADSGYLTRRLVDVAQDVIIREDDCGTDRGIRVTALREGTEEIENLYDRLVGRTAFEKVVHPETGAVLVSTNELIDEDIARAITDAGIDNVEIRTAFTCNTSHGVCKKCYGRNLATGNDVEVGEAVGIIAAQSIGEPGTQLTMRTFHTGGVAGDDITQGLPRIQELFEARNPKGQAVISEIDGQVIDFTESRDKRELTIQGLSETRTYTIPFGSRLRVQLGEEVKAGQVFTEGSIDPKELLNVKGVSGVQNYLLQEVQKVYRMQGVEIGDKHVEVMVRQMIRRVRVIESGETSLLPGSLVDISTFKEACKEALRAGKALASAKPVLLGITKASLETDSFLSAASFQETTRVLTDAAIKGKSDYLRGLKENVIIGKLVPAGTGMTRYRQIGLEIAGEAPVEADSPVE.

The Zn(2+) site is built by Cys-60, Cys-62, Cys-75, and Cys-78. The Mg(2+) site is built by Asp-449, Asp-451, and Asp-453. 4 residues coordinate Zn(2+): Cys-818, Cys-892, Cys-899, and Cys-902.

It belongs to the RNA polymerase beta' chain family. In terms of assembly, the RNAP catalytic core consists of 2 alpha, 1 beta, 1 beta' and 1 omega subunit. When a sigma factor is associated with the core the holoenzyme is formed, which can initiate transcription. The cofactor is Mg(2+). Zn(2+) is required as a cofactor.

The catalysed reaction is RNA(n) + a ribonucleoside 5'-triphosphate = RNA(n+1) + diphosphate. In terms of biological role, DNA-dependent RNA polymerase catalyzes the transcription of DNA into RNA using the four ribonucleoside triphosphates as substrates. The protein is DNA-directed RNA polymerase subunit beta' of Exiguobacterium sibiricum (strain DSM 17290 / CCUG 55495 / CIP 109462 / JCM 13490 / 255-15).